Reading from the N-terminus, the 139-residue chain is Tetra-peptide repeat homeobox-like protein (139 aa).

Disordered regions lie at residues 1-22 and 78-139; these read MQDP…RQRQ and ERWF…QQPQ. Residues 20-79 constitute a DNA-binding region (homeobox); the sequence is QRQDRTIYNWKQQEVLENHFKEEQYPDYDTRQELAEMLNLREYQVQVWFKNRRAKRSRER. The span at 82-139 shows a compositional bias: low complexity; it reads QKQLQQLQKHPQQQHPQQQHPQQQLQQQQPQQQPQQQQPQQQPQQQQPQQQQLHQQPQ.

Belongs to the paired homeobox family.

The protein resides in the nucleus. Transcription factor required for zygotic genome activation (ZGA), a critical event in early embryonic development during which the developmental control passes from maternally provided mRNAs to the expression of the zygotic genome after fertilization. Protein produced from maternal transcripts that binds and activates expression of key ZGA marker genes, such as NANOGNB, ZSCAN4, DUXB, KLF5 and DPPA3. Binds to regulatory DNA sequences containing a 5'-TAATCC-3' sequence motif. The sequence is that of Tetra-peptide repeat homeobox-like protein from Homo sapiens (Human).